The chain runs to 58 residues: ComX pheromone (58 aa).

Positions Met-1 to Lys-52 are excised as a propeptide. Trp-56 carries 3'-geranyl-2',N2-cyclotryptophan; in strain RO-E-2 /NRRL B-23055 lipidation.

In terms of assembly, interacts directly with the sensor histidine kinase ComP and stimulates its activity. In terms of processing, trp-56 is modified by geranylation, which is essential for activity. Modified by the tryptophan prenyltransferase ComQ before export to the extracellular environment. The type of isoprenyl derivative differs among the different pherotypes and depends on ComX primary sequence.

It localises to the secreted. Part of a major quorum-sensing system that regulates the development of genetic competence. Acts through the activation of the two-component regulatory system ComP/ComA composed of a sensor histidine kinase, ComP, and a response regulator, ComA. The chain is ComX pheromone from Bacillus spizizenii (Bacillus subtilis subsp. spizizenii).